We begin with the raw amino-acid sequence, 79 residues long: UPF0291 protein BH2353 (79 aa).

The disordered stretch occupies residues 57-79 (GAGNDVTPDKLKQSKNKYRNDIH). Basic and acidic residues predominate over residues 63–79 (TPDKLKQSKNKYRNDIH).

This sequence belongs to the UPF0291 family.

It is found in the cytoplasm. In Halalkalibacterium halodurans (strain ATCC BAA-125 / DSM 18197 / FERM 7344 / JCM 9153 / C-125) (Bacillus halodurans), this protein is UPF0291 protein BH2353.